Consider the following 408-residue polypeptide: Putative odorant receptor 92a (408 aa).

The Cytoplasmic portion of the chain corresponds to 1–52; it reads MLFRKRKPKSDDEVITFDELTRFPMTFYKTIGEDLYSDRDPNVIRRYLLRFY. The chain crosses the membrane as a helical span at residues 53 to 73; it reads LVLGFLNFNAYVVGEIAYFIV. A topological domain (extracellular) is located at residue histidine 74. The helical transmembrane segment at 75-95 threads the bilayer; the sequence is IMSTTTLLEATAVAPCIGFSF. Over 96-144 the chain is Cytoplasmic; it reads MADFKQFGLTVNRKRLVRLLDDLKEIFPLDLEAQRKYNVSFYRKHMNRV. Residues 145 to 165 form a helical membrane-spanning segment; that stretch reads MTLFTILCMTYTSSFSFYPAI. Topologically, residues 166–209 are extracellular; it reads KSTIKYYLMGSEIFERNYGFHILFPYDAETDLTVYWFSYWGLAH. The helical transmembrane segment at 210 to 230 threads the bilayer; sequence CAYVAGVSYVCVDLLLIATIT. Topologically, residues 231-276 are cytoplasmic; it reads QLTMHFNFIANDLEAYEGGDHTDEENIKYLHNLVVYHARALDLSEE. A helical membrane pass occupies residues 277 to 301; that stretch reads VNNIFSFLILWNFIAASLVICFAGF. The Extracellular segment spans residues 302-310; sequence QITASNVED. A helical transmembrane segment spans residues 311–331; the sequence is IVLYFIFFSASLVQVFVVCYY. The Cytoplasmic portion of the chain corresponds to 332-378; the sequence is GDEMISSSSRIGHSAFNQNWLPCSTKYKRILQFIIARSQKPASIRPP. The helical transmembrane segment at 379–399 threads the bilayer; that stretch reads TFPPISFNTFMKVISMSYQFF. Residues 400–408 are Extracellular-facing; the sequence is ALLRTTYYG.

It belongs to the insect chemoreceptor superfamily. Heteromeric odorant receptor channel (TC 1.A.69) family. Or49a subfamily. As to quaternary structure, interacts with Orco. Complexes exist early in the endomembrane system in olfactory sensory neurons (OSNs), coupling these complexes to the conserved ciliary trafficking pathway.

It localises to the cell membrane. Odorant receptor which mediates acceptance or avoidance behavior, depending on its substrates. The odorant receptor repertoire encodes a large collection of odor stimuli that vary widely in identity, intensity, and duration. May form a complex with Orco to form odorant-sensing units, providing sensitive and prolonged odorant signaling and calcium permeability. The sequence is that of Putative odorant receptor 92a (Or92a) from Drosophila melanogaster (Fruit fly).